Consider the following 93-residue polypeptide: Alpha-defensin 22 (93 aa).

Positions 1-19 (MKKLVLLSALVLLAYQVQT) are cleaved as a signal peptide. A propeptide spanning residues 20–58 (DPIQNTDEETNTEEQPGEEDQAVSVSFGGQEGSALHEKL) is cleaved from the precursor. The segment at 22–41 (IQNTDEETNTEEQPGEEDQA) is disordered. Residues 25–40 (TDEETNTEEQPGEEDQ) are compositionally biased toward acidic residues. 3 disulfide bridges follow: C64/C89, C66/C81, and C71/C88.

This sequence belongs to the alpha-defensin family.

The protein localises to the secreted. Its function is as follows. May have microbicidal activities. The sequence is that of Alpha-defensin 22 (Defa22) from Mus musculus (Mouse).